The primary structure comprises 400 residues: Protein TFG (400 aa).

The residue at position 1 (M1) is an N-acetylmethionine. Residues 10–91 form the PB1 domain; it reads KLIIKAQLGE…RILKLTLFVN (82 aa). S50 is modified (phosphoserine). Positions 97 to 124 form a coiled coil; sequence LESSQVKYLRRELIELRNKVNRLLDSLE. Disordered stretches follow at residues 120–160 and 187–400; these read LDSL…STQV and LTDD…PGYR. Positions 150–160 are enriched in polar residues; that stretch reads SDSSGKQSTQV. S197 is modified (phosphoserine). Composition is skewed to low complexity over residues 237-258, 265-298, and 307-327; these read GQIE…AQQP, PQQY…PTSQ, and QPQQ…YPAQ. The span at 328–340 shows a compositional bias: polar residues; it reads TYTAQTSQPTNYT. R385 and R400 each carry omega-N-methylarginine.

As to quaternary structure, self-associates to form an oligomeric complex. Interacts with PDCD6; promoting localization and polymerization of TFG at endoplasmic reticulum exit site. Interacts with SEC16B. Ubiquitous.

It localises to the endoplasmic reticulum. Its function is as follows. Plays a role in the normal dynamic function of the endoplasmic reticulum (ER) and its associated microtubules. Required for secretory cargo traffic from the endoplasmic reticulum to the Golgi apparatus. The sequence is that of Protein TFG (TFG) from Homo sapiens (Human).